Reading from the N-terminus, the 222-residue chain is GTP cyclohydrolase 1 (222 aa).

Positions 111, 114, and 182 each coordinate Zn(2+).

Belongs to the GTP cyclohydrolase I family. As to quaternary structure, homomer.

It carries out the reaction GTP + H2O = 7,8-dihydroneopterin 3'-triphosphate + formate + H(+). The protein operates within cofactor biosynthesis; 7,8-dihydroneopterin triphosphate biosynthesis; 7,8-dihydroneopterin triphosphate from GTP: step 1/1. This Salmonella gallinarum (strain 287/91 / NCTC 13346) protein is GTP cyclohydrolase 1.